The primary structure comprises 134 residues: MRSPYSLPYLLFLPLGACFPVLDTEEPVDAVGGTGREMSWMDPARGRPFPWGSPGWPRAPYPHALLVTAKELRASGKARAGFQLRLGRQDDGSEATGLLLGEAEKVGGLLGTLAEELNGYSRKKGGFSFRFGRR.

The N-terminal stretch at 1–18 is a signal peptide; that stretch reads MRSPYSLPYLLFLPLGAC. A propeptide spanning residues 19–88 is cleaved from the precursor; sequence FPVLDTEEPV…RAGFQLRLGR (70 aa). Phe131 carries the post-translational modification Phenylalanine amide.

It belongs to the RFamide neuropeptide family. In terms of assembly, ligand for the G-protein coupled receptor QRFPR/GPR103. In terms of tissue distribution, expressed in the hypothalamus.

It is found in the secreted. Its function is as follows. Stimulates feeding behavior, metabolic rate and locomotor activity and increases blood pressure. May have orexigenic activity. May promote aldosterone secretion by the adrenal gland. The sequence is that of Orexigenic neuropeptide QRFP from Bos taurus (Bovine).